Consider the following 234-residue polypeptide: Sugar fermentation stimulation protein homolog (234 aa).

This sequence belongs to the SfsA family.

In Shewanella piezotolerans (strain WP3 / JCM 13877), this protein is Sugar fermentation stimulation protein homolog.